The chain runs to 469 residues: Probable monogalactosyldiacylglycerol synthase 2, chloroplastic (469 aa).

A chloroplast-targeting transit peptide spans 1-42 (MVISVATPRRSIRDAVLGGVLGAGGRQLYQPLRCAFYDGAAG).

This sequence belongs to the glycosyltransferase 28 family.

Its subcellular location is the plastid. It localises to the chloroplast membrane. The enzyme catalyses a 1,2-diacyl-sn-glycerol + UDP-alpha-D-galactose = a 1,2-diacyl-3-O-(beta-D-galactosyl)-sn-glycerol + UDP + H(+). Involved in the synthesis of the major structural component of photosynthetic membranes. The protein is Probable monogalactosyldiacylglycerol synthase 2, chloroplastic (MGD2) of Oryza sativa subsp. japonica (Rice).